We begin with the raw amino-acid sequence, 347 residues long: Protein-glutamate methylesterase/protein-glutamine glutaminase 3 (347 aa).

The Response regulatory domain occupies 3–120; it reads QVFIVDDSAV…KNFLEESEIL (118 aa). Position 54 is a 4-aspartylphosphate (Asp-54). In terms of domain architecture, CheB-type methylesterase spans 159-347; sequence IDTTDKLIAI…SKIVGEVQYF (189 aa). Catalysis depends on residues Ser-171, His-197, and Asp-293.

It belongs to the CheB family. Post-translationally, phosphorylated by CheA. Phosphorylation of the N-terminal regulatory domain activates the methylesterase activity.

The protein localises to the cytoplasm. It carries out the reaction [protein]-L-glutamate 5-O-methyl ester + H2O = L-glutamyl-[protein] + methanol + H(+). It catalyses the reaction L-glutaminyl-[protein] + H2O = L-glutamyl-[protein] + NH4(+). Its function is as follows. Involved in chemotaxis. Part of a chemotaxis signal transduction system that modulates chemotaxis in response to various stimuli. Catalyzes the demethylation of specific methylglutamate residues introduced into the chemoreceptors (methyl-accepting chemotaxis proteins or MCP) by CheR. Also mediates the irreversible deamidation of specific glutamine residues to glutamic acid. This Leptospira interrogans serogroup Icterohaemorrhagiae serovar copenhageni (strain Fiocruz L1-130) protein is Protein-glutamate methylesterase/protein-glutamine glutaminase 3.